A 113-amino-acid chain; its full sequence is N-alpha-acetyltransferase 38, NatC auxiliary subunit (113 aa).

The disordered stretch occupies residues 1 to 29 (MAAVLEENGCSRQSSPGAGDSDAEAGDTA). A Sm domain is found at 28–106 (TARHKLESLL…IVSIQVELES (79 aa)).

The protein belongs to the snRNP Sm proteins family. In terms of assembly, component of the N-terminal acetyltransferase C (NatC) complex.

The protein resides in the cytoplasm. Its subcellular location is the nucleus. Its function is as follows. Auxillary component of the N-terminal acetyltransferase C (NatC) complex which catalyzes acetylation of N-terminal methionine residues. N-terminal acetylation protects proteins from ubiquitination and degradation by the N-end rule pathway. This chain is N-alpha-acetyltransferase 38, NatC auxiliary subunit (naa38), found in Xenopus tropicalis (Western clawed frog).